Consider the following 487-residue polypeptide: Keratin, type I cytoskeletal 12 (487 aa).

The segment at 1 to 118 (MSLSVCTSAL…GNDGGLLSGS (118 aa)) is head. The segment at 119-154 (EKETMQNLNDRLASYLGKVRSLEEANAELENKIREW) is coil 1A. The IF rod domain occupies 119-433 (EKETMQNLND…RLLEGDSQGD (315 aa)). Residues 158 to 175 (RRTRDAGSQSDYSKYYPL) are linker 1. The coil 1B stretch occupies residues 176–267 (IEDLKNKIVS…KNHEEELQSF (92 aa)). Positions 268–290 (QAGGPGEVNVEMDAAPGVDLTKV) are linker 12. Residues 291–428 (LNEMRAQYEA…IETYRRLLEG (138 aa)) form a coil 2 region. The segment at 428–461 (GDSQGDGFDESSSLSVSKPQTPSVDSSKDPNKTR) is disordered. A tail region spans residues 429–487 (DSQGDGFDESSSLSVSKPQTPSVDSSKDPNKTRKIKTVVQEIVNGEVVSSQVQELEEEM). Residues 437–452 (ESSSLSVSKPQTPSVD) show a composition bias toward polar residues.

The protein belongs to the intermediate filament family. Heterotetramer of two type I and two type II keratins. Keratin-3 associates with keratin-12. Expressed in the corneal epithelium (at protein level). Also expressed in the suprabasal limbal epithelium of the cornea (at protein level).

In terms of biological role, involved in corneal epithelium organization, integrity and corneal keratin expression. The sequence is that of Keratin, type I cytoskeletal 12 (Krt12) from Mus musculus (Mouse).